A 100-amino-acid chain; its full sequence is Urease subunit gamma (100 aa).

It belongs to the urease gamma subunit family. As to quaternary structure, heterotrimer of UreA (gamma), UreB (beta) and UreC (alpha) subunits. Three heterotrimers associate to form the active enzyme.

The protein resides in the cytoplasm. It carries out the reaction urea + 2 H2O + H(+) = hydrogencarbonate + 2 NH4(+). The protein operates within nitrogen metabolism; urea degradation; CO(2) and NH(3) from urea (urease route): step 1/1. In Haemophilus influenzae (strain PittEE), this protein is Urease subunit gamma.